The primary structure comprises 218 residues: Adenylate kinase (218 aa).

Glycine 10–threonine 15 is a binding site for ATP. The NMP stretch occupies residues serine 30 to valine 59. Residues threonine 31, arginine 36, alanine 57 to valine 59, glycine 85 to arginine 88, and glutamine 92 each bind AMP. Residues glycine 122–aspartate 159 are LID. ATP contacts are provided by residues arginine 123 and threonine 132–tyrosine 133. The AMP site is built by arginine 156 and arginine 167. Glycine 203 is an ATP binding site.

Belongs to the adenylate kinase family. Monomer.

Its subcellular location is the cytoplasm. It carries out the reaction AMP + ATP = 2 ADP. Its pathway is purine metabolism; AMP biosynthesis via salvage pathway; AMP from ADP: step 1/1. Its function is as follows. Catalyzes the reversible transfer of the terminal phosphate group between ATP and AMP. Plays an important role in cellular energy homeostasis and in adenine nucleotide metabolism. The polypeptide is Adenylate kinase (Polaromonas sp. (strain JS666 / ATCC BAA-500)).